Consider the following 153-residue polypeptide: D-aminoacyl-tRNA deacylase (153 aa).

The short motif at 137-138 (GP) is the Gly-cisPro motif, important for rejection of L-amino acids element.

The protein belongs to the DTD family. As to quaternary structure, homodimer.

The protein localises to the cytoplasm. The enzyme catalyses glycyl-tRNA(Ala) + H2O = tRNA(Ala) + glycine + H(+). It catalyses the reaction a D-aminoacyl-tRNA + H2O = a tRNA + a D-alpha-amino acid + H(+). An aminoacyl-tRNA editing enzyme that deacylates mischarged D-aminoacyl-tRNAs. Also deacylates mischarged glycyl-tRNA(Ala), protecting cells against glycine mischarging by AlaRS. Acts via tRNA-based rather than protein-based catalysis; rejects L-amino acids rather than detecting D-amino acids in the active site. By recycling D-aminoacyl-tRNA to D-amino acids and free tRNA molecules, this enzyme counteracts the toxicity associated with the formation of D-aminoacyl-tRNA entities in vivo and helps enforce protein L-homochirality. This Dehalococcoides mccartyi (strain ATCC BAA-2266 / KCTC 15142 / 195) (Dehalococcoides ethenogenes (strain 195)) protein is D-aminoacyl-tRNA deacylase.